Consider the following 240-residue polypeptide: Enoyl-CoA delta isomerase 2, peroxisomal (240 aa).

Residues 238-240 (PKL) carry the Microbody targeting signal motif.

The protein belongs to the enoyl-CoA hydratase/isomerase family.

The protein localises to the peroxisome. It catalyses the reaction a (3Z)-enoyl-CoA = a 4-saturated (2E)-enoyl-CoA. It carries out the reaction a (3E)-enoyl-CoA = a 4-saturated (2E)-enoyl-CoA. Its pathway is lipid metabolism; fatty acid beta-oxidation. In terms of biological role, able to isomerize both 3-cis and 3-trans double bonds into the 2-trans form in a range of enoyl-CoA species. Essential for the beta oxidation of unsaturated fatty acids. Involved with IBR1 and IBR3 in the peroxisomal beta-oxidation of indole-3-butyric acid (IBA) to form indole-3-acetic acid (IAA), a biologically active auxin. The protein is Enoyl-CoA delta isomerase 2, peroxisomal of Arabidopsis thaliana (Mouse-ear cress).